The primary structure comprises 92 residues: Small ribosomal subunit protein bS20 (92 aa).

Positions 1-25 (MANSAQARKRARQAAKANSHNSALR) are disordered.

Belongs to the bacterial ribosomal protein bS20 family.

Functionally, binds directly to 16S ribosomal RNA. The sequence is that of Small ribosomal subunit protein bS20 from Burkholderia mallei (strain NCTC 10247).